Reading from the N-terminus, the 282-residue chain is TPR repeat protein oca3 (282 aa).

TPR repeat units lie at residues 16–50, 71–104, 139–172, and 174–211; these read IVALFSQQEAYAKLGKYKDEIWDVYQKVFIAALTT, PRVEGLYGMFLEATASEKDAMSYYNSKLSEDPTH, LEAWAELADIYVSVEAFESAIFCYEEMVLLQPFE, and RLFARLGDLYFVLAQSNATNYWFSLKHYCRSVEICEEY.

Its subcellular location is the cytoplasm. The protein resides in the nucleus. Its function is as follows. May be involved in cell cycle regulation. In Schizosaccharomyces pombe (strain 972 / ATCC 24843) (Fission yeast), this protein is TPR repeat protein oca3 (oca3).